Here is a 1492-residue protein sequence, read N- to C-terminus: Condensin-2 complex subunit D3-L (1492 aa).

Positions 152–201 (WPRDPNASRKRKKDTLKSSQGDNRGGRKRPRPPRRDEQEMEDLSEEEQDE) are disordered. Acidic residues predominate over residues 189-201 (QEMEDLSEEEQDE). HEAT repeat units lie at residues 543–581 (SSDG…CHLI), 583–619 (CSSE…AQPH), and 621–659 (VLIQ…QSIT). Disordered stretches follow at residues 1269–1345 (QLER…PRPR), 1359–1406 (RKAA…SLVG), and 1454–1492 (IMSP…KPSN). Polar residues predominate over residues 1277–1290 (NVQNPPSAESTGSP). Residues 1377 to 1388 (PSTPSPARTTSS) show a composition bias toward low complexity.

In terms of assembly, component of the condensin-2 complex, which contains the smc2 and smc4 heterodimer, and three non SMC subunits, ncapg2, ncaph2 and ncapd3 that probably regulate the complex.

Its subcellular location is the nucleus. Its function is as follows. Regulatory subunit of the condensin-2 complex, a complex which establishes mitotic chromosome architecture and is involved in physical rigidity of the chromatid axis. In Xenopus laevis (African clawed frog), this protein is Condensin-2 complex subunit D3-L.